A 128-amino-acid polypeptide reads, in one-letter code: Large ribosomal subunit protein bL12 (128 aa).

It belongs to the bacterial ribosomal protein bL12 family. Homodimer. Part of the ribosomal stalk of the 50S ribosomal subunit. Forms a multimeric L10(L12)X complex, where L10 forms an elongated spine to which 2 to 4 L12 dimers bind in a sequential fashion. Binds GTP-bound translation factors.

Its function is as follows. Forms part of the ribosomal stalk which helps the ribosome interact with GTP-bound translation factors. Is thus essential for accurate translation. This is Large ribosomal subunit protein bL12 from Methylobacillus flagellatus (strain ATCC 51484 / DSM 6875 / VKM B-1610 / KT).